The sequence spans 1059 residues: Microtubule-associated protein 1S (1059 aa).

The necessary for the microtubule-organizing center localization stretch occupies residues 1 to 797 (MAAVAGSGAA…SESLPTLSDS (797 aa)). Ser321 and Ser472 each carry phosphoserine. 2 disordered regions span residues 461 to 733 (PQDL…ASPH) and 751 to 942 (VPMA…SATP). Basic and acidic residues-rich tracts occupy residues 466–486 (GPGR…KREG) and 494–530 (PGQE…KDPK). Residues 547-557 (SVPNLKKTNAQ) are compositionally biased toward polar residues. Ser582 is modified (phosphoserine). Low complexity predominate over residues 591–603 (ASPPSAACGSPAS). Thr638 is modified (phosphothreonine). Phosphoserine is present on Ser640. A compositionally biased stretch (basic and acidic residues) spans 642–652 (ESHRSPAEGSE). Ser655 and Ser657 each carry phosphoserine. A necessary for interaction with RASSF1 isoform A and isoform C region spans residues 666–1059 (PDASPTVTTP…DAFPACKVEF (394 aa)). Positions 670–680 (PTVTTPTVTTP) are enriched in low complexity. Residues 714–966 (EAGLSLPLRG…GSSAHLVDEE (253 aa)) are necessary for association with microtubules. 2 positions are modified to phosphoserine: Ser731 and Ser759. Residues 759-769 (SPGSSNDSSAR) show a composition bias toward low complexity. Residues 783–796 (PPTSVSESLPTLSD) are compositionally biased toward polar residues. Ser809 carries the phosphoserine modification. Residues 825-836 (PDPLKVPPPLPD) are compositionally biased toward pro residues. Low complexity-rich tracts occupy residues 873–887 (AAAP…AKTK) and 923–936 (TATR…SSRP). Positions 960–1059 (AHLVDEEFFQ…DAFPACKVEF (100 aa)) are necessary for association with actin. Residues 967 to 991 (FFQRVRALCYVISGQDQRKEEGMRA) are necessary for the mitochondrial aggregation and genome destruction.

Belongs to the MAP1 family. As to quaternary structure, heterodimer of a heavy and a light chain. Interacts with microtubules and actin. Both MAP1S heavy and light chains interact with microtubules. MAP1S light chain interacts with actin. Interacts (via C-terminus) with GAN (via Kelch domains). Interacts with ESR1, LRPPRC, RASSF1 isoform A and isoform C, microtubules and VCY2. Interacts with WDR47 (via N-terminus of light chain). As to expression, expressed in neurons (at protein level). Expressed in spermatocytes, spermatids and spermatozoa. Expressed in the cerebral cortex. Highly expressed in testis. Moderately expressed in the brain, colon, heart, kidney, liver, lung, placenta, small intestine, spleen and stomach. Weakly expressed in muscle.

Its subcellular location is the nucleus. It localises to the cytoplasm. The protein resides in the cytosol. It is found in the cytoskeleton. The protein localises to the spindle. In terms of biological role, microtubule-associated protein that mediates aggregation of mitochondria resulting in cell death and genomic destruction (MAGD). Plays a role in anchoring the microtubule organizing center to the centrosomes. Binds to DNA. Plays a role in apoptosis. Involved in the formation of microtubule bundles. In Homo sapiens (Human), this protein is Microtubule-associated protein 1S (MAP1S).